Here is a 64-residue protein sequence, read N- to C-terminus: Conotoxin Ts-011 (64 aa).

The N-terminal stretch at 1-22 (MHCLPVLVILLLLIASTPSVDA) is a signal peptide. Positions 23–52 (RPKTKDDVPPASFHGADDANRILQTLWNLR) are excised as a propeptide. At Ile63 the chain carries Isoleucine amide.

This sequence belongs to the conotoxin T superfamily. In terms of processing, contains 2 disulfide bonds that can be either 'C1-C3, C2-C4' or 'C1-C4, C2-C3', since these disulfide connectivities have been observed for conotoxins with cysteine framework V (for examples, see AC P0DQQ7 and AC P81755). Expressed by the venom duct.

The protein resides in the secreted. In Conus tessulatus (Tessellate cone), this protein is Conotoxin Ts-011.